Here is a 335-residue protein sequence, read N- to C-terminus: Phospholipid scramblase 1 (335 aa).

The interval 1 to 101 (MEKHGPPEHA…NHPGGPGGTP (101 aa)) is proline-rich domain (PRD). Residues 1–102 (MEKHGPPEHA…HPGGPGGTPW (102 aa)) are disordered. The Cytoplasmic portion of the chain corresponds to 1–305 (MEKHGPPEHA…IQFPLDLDVK (305 aa)). 6 tandem repeats follow at residues 23-29 (QGPYPGP), 30-36 (QGPYPGP), 37-43 (QGPYAGP), 44-50 (QGPYPGP), 51-57 (QGPYAGP), and 58-64 (QGPYPGP). Positions 23–71 (QGPYPGPQGPYPGPQGPYAGPQGPYPGPQGPYAGPQGPYPGPQPGYPVP) are 7 X 7 AA tandem repeats of Q-G-P-Y-[AP]-G-P. The segment covering 26 to 37 (YPGPQGPYPGPQ) has biased composition (pro residues). A compositionally biased stretch (pro residues) spans 59–72 (GPYPGPQPGYPVPP). The SH3-binding 1 signature appears at 64–72 (PQPGYPVPP). The stretch at 65–71 (QPGYPVP) is one 7; approximate repeat. Tyr-91 is modified (phosphotyrosine; by ABL). The SH3-binding 2 signature appears at 101 to 109 (PWMQAPPPP). Position 178 is a phosphothreonine; by PKC/PRKCD (Thr-178). Residues Cys-201, Cys-202, Cys-205, and Cys-206 are each lipidated (S-palmitoyl cysteine). Residues 274 to 283 (GKISKQWSGF) carry the Nuclear localization signal motif. A helical membrane pass occupies residues 306 to 322 (MKAVMLGACFLIDFMFF). Topologically, residues 323 to 335 (ERTGNEEQRSGVW) are extracellular.

This sequence belongs to the phospholipid scramblase family. In terms of assembly, forms homooligomers in the presence of calcium. Interacts with ABL. Interacts with RELT, RELL1 and RELL2. Interacts with OXSR1 in the presence of RELT. Interacts with OCLN, TOP2A and TOP2B. Interacts with TRPC1, TRPC4 and TRPC5. Interacts with ILDR1. It depends on Ca(2+) as a cofactor. Mg(2+) serves as cofactor. Zn(2+) is required as a cofactor. Phosphorylated on tyrosine residues. Phosphorylated by OXSR1 in the presence of RELT. Phosphorylation at Thr-178 by PKC/PKCD increases its phospholipid scramblase activity during both cell stimulation and apoptosis. In terms of processing, palmitoylation is required for its phospholipid scramblase activity. Palmitoylation regulates its localization to the cell membrane or the nucleus; trafficking to the cell membrane is dependent upon palmitoylation whereas in the absence of palmitoylation, localizes to the nucleus.

The protein localises to the cell membrane. The protein resides in the nucleus. Its subcellular location is the cytoplasm. It is found in the perinuclear region. It catalyses the reaction a 1,2-diacyl-sn-glycero-3-phosphocholine(in) = a 1,2-diacyl-sn-glycero-3-phosphocholine(out). The enzyme catalyses a 1,2-diacyl-sn-glycero-3-phosphoethanolamine(in) = a 1,2-diacyl-sn-glycero-3-phosphoethanolamine(out). It carries out the reaction a 1,2-diacyl-sn-glycero-3-phospho-L-serine(in) = a 1,2-diacyl-sn-glycero-3-phospho-L-serine(out). Its function is as follows. Catalyzes calcium-induced ATP-independent rapid bidirectional and non-specific distribution of phospholipids (lipid scrambling or lipid flip-flop) between the inner and outer leaflet of the plasma membrane resulting in collapse of the phospholipid asymmetry which leads to phosphatidylserine externalization on the cell surface. Mediates calcium-dependent phosphatidylserine externalization and apoptosis in neurons via its association with TRPC5. Also exhibits magnesium-dependent nuclease activity against double-stranded DNA and RNA but not single-stranded DNA and can enhance DNA decatenation mediated by TOP2A. Negatively regulates FcR-mediated phagocytosis in differentiated macrophages. May contribute to cytokine-regulated cell proliferation and differentiation. In Rattus norvegicus (Rat), this protein is Phospholipid scramblase 1 (Plscr1).